The primary structure comprises 143 residues: Small ribosomal subunit protein eS6 (143 aa).

It belongs to the eukaryotic ribosomal protein eS6 family.

The polypeptide is Small ribosomal subunit protein eS6 (Methanoregula boonei (strain DSM 21154 / JCM 14090 / 6A8)).